We begin with the raw amino-acid sequence, 144 residues long: Large ribosomal subunit protein uL15 (144 aa).

The segment covering Met1–Asp14 has biased composition (basic and acidic residues). A disordered region spans residues Met1 to Lys43. Residues Thr23–Gln35 show a composition bias toward gly residues.

Belongs to the universal ribosomal protein uL15 family. Part of the 50S ribosomal subunit.

Functionally, binds to the 23S rRNA. This chain is Large ribosomal subunit protein uL15, found in Latilactobacillus sakei subsp. sakei (strain 23K) (Lactobacillus sakei subsp. sakei).